A 94-amino-acid chain; its full sequence is Integration host factor subunit beta (94 aa).

This sequence belongs to the bacterial histone-like protein family. Heterodimer of an alpha and a beta chain.

This protein is one of the two subunits of integration host factor, a specific DNA-binding protein that functions in genetic recombination as well as in transcriptional and translational control. The chain is Integration host factor subunit beta from Mesorhizobium japonicum (strain LMG 29417 / CECT 9101 / MAFF 303099) (Mesorhizobium loti (strain MAFF 303099)).